The following is a 293-amino-acid chain: Oxidoreductase R2 (293 aa).

The protein belongs to the asaB hydroxylase/desaturase family.

It participates in secondary metabolite biosynthesis. Its function is as follows. Oxidoreductase; part of the gene cluster that mediates the biosynthesis of squalestatin S1 (SQS1, also known as zaragozic acid A), a heavily oxidized fungal polyketide that offers potent cholesterol lowering activity by targeting squalene synthase (SS). SQS1 is composed of a 2,8-dioxobicyclic[3.2.1]octane-3,4,5-tricarboxyclic acid core that is connected to two lipophilic polyketide arms. These initial steps feature the priming of an unusual benzoic acid starter unit onto the highly reducing polyketide synthase pks2, followed by oxaloacetate extension and product release to generate a tricarboxylic acid containing product. The phenylalanine ammonia lyase (PAL) M7 and the acyl-CoA ligase M9 are involved in transforming phenylalanine into benzoyl-CoA. The citrate synthase-like protein R3 is involved in connecting the C-alpha-carbons of the hexaketide chain and oxaloacetate to afford the tricarboxylic acid unit. The potential hydrolytic enzymes, M8 and M10, are in close proximity to pks2 and may participate in product release. On the other side, the tetraketide arm is synthesized by a the squalestatin tetraketide synthase pks1 and enzymatically esterified to the core in the last biosynthetic step, by the acetyltransferase M4. The biosynthesis of the tetraketide must involve 3 rounds of chain extension. After the first and second rounds methyl-transfer occurs, and in all rounds of extension the ketoreductase and dehydratase are active. The enoyl reductase and C-MeT of pks1 are not active in the final round of extension. The acetyltransferase M4 appears to have a broad substrate selectivity for its acyl CoA substrate, allowing the in vitro synthesis of novel squalestatins. The biosynthesis of SQS1 requires several oxidative steps likely performed by oxidoreductases M1, R1 and R2. Finally, in support of the identification of the cluster as being responsible for SQS1 production, the cluster contains a gene encoding a putative squalene synthase (SS) R6, suggesting a likely mechanism for self-resistance. The polypeptide is Oxidoreductase R2 (Phoma sp. (strain ATCC 20986 / MF5453)).